The primary structure comprises 165 residues: MPPKFDPNEVKVVYLRCTGGEVGATSALAPKIGPLGLSPKKVGDDIAKATGDWKGLRITVKLTIQNRQAQIEVVPSASALIIKALKEPPRDRKKQKNIKHSGNITFDEIVNIARQMRHRSLARELSGTIKEILGTAQSVGCNVDGRHPHDIIDDINSGAVECPAS.

Position 38 is a phosphoserine (serine 38). Lysine 40 is covalently cross-linked (Glycyl lysine isopeptide (Lys-Gly) (interchain with G-Cter in SUMO2)). Residue lysine 48 forms a Glycyl lysine isopeptide (Lys-Gly) (interchain with G-Cter in ubiquitin) linkage. An N6-acetyllysine modification is found at lysine 54. Lysine 83 is covalently cross-linked (Glycyl lysine isopeptide (Lys-Gly) (interchain with G-Cter in ubiquitin)). Serine 165 bears the Phosphoserine mark.

The protein belongs to the universal ribosomal protein uL11 family. In terms of assembly, component of the large ribosomal subunit. Mature ribosomes consist of a small (40S) and a large (60S) subunit. The 40S subunit contains about 33 different proteins and 1 molecule of RNA (18S). The 60S subunit contains about 49 different proteins and 3 molecules of RNA (28S, 5.8S and 5S). Post-translationally, ubiquitinated at Lys-48 and Lys-83 by RNF14 and RNF25 in response to ribosome collisions (ribosome stalling).

The protein localises to the cytoplasm. Its function is as follows. Component of the large ribosomal subunit. The ribosome is a large ribonucleoprotein complex responsible for the synthesis of proteins in the cell. Binds directly to 26S ribosomal RNA. This Mus musculus (Mouse) protein is Large ribosomal subunit protein uL11 (Rpl12).